The primary structure comprises 329 residues: 2-oxoglutarate-dependent dioxygenase htyE (329 aa).

The Fe2OG dioxygenase domain occupies 175-289; that stretch reads NTSELRLLHY…RYSVAYFGKP (115 aa). Histidine 201, aspartate 203, and histidine 261 together coordinate Fe cation. Arginine 280 contributes to the 2-oxoglutarate binding site.

Belongs to the iron/ascorbate-dependent oxidoreductase family. Fe(2+) serves as cofactor.

Its pathway is antifungal biosynthesis. Its function is as follows. 2-oxoglutarate-dependent dioxygenase; part of the gene cluster that mediates the de novo generation of L-homotyrosine from acetyl-CoA and 4-hydroxyphenyl-pyruvate. L-homotyrosine is a building block of echinocandin B, a fungal lipidated cyclic hexapeptide that acts as an antifungal agent. L-homotyrosine 4-hydroxyphenyl-pyruvate first undergoes an aldol-type condensation by htyA with the C-2 of acetyl-CoA followed by the release of CoA to form 2-(4-hydroxybenzyl)-malate. This is followed by isomerization of 2-(4-hydroxy-benzyl)-malate to 3-(4-hydroxybenzyl)-malate by htyD. Thereafter, 3-(4-hydroxybenzyl)-malate undergoes decarboxylation and oxidation to form 2-oxo-4-(4-hydroxybenzyl)butanoic acid, coupled to reduction of NAD(+) to NADH by htyC. The product then undergoes transamination catalyzed by htyB to form L-homotyrosine. The chain is 2-oxoglutarate-dependent dioxygenase htyE from Aspergillus rugulosus (Emericella rugulosa).